Reading from the N-terminus, the 55-residue chain is Large ribosomal subunit protein eL40 (55 aa).

The protein belongs to the eukaryotic ribosomal protein eL40 family.

The chain is Large ribosomal subunit protein eL40 from Ignicoccus hospitalis (strain KIN4/I / DSM 18386 / JCM 14125).